The primary structure comprises 119 residues: Ribonuclease P protein component (119 aa).

The protein belongs to the RnpA family. As to quaternary structure, consists of a catalytic RNA component (M1 or rnpB) and a protein subunit.

It catalyses the reaction Endonucleolytic cleavage of RNA, removing 5'-extranucleotides from tRNA precursor.. RNaseP catalyzes the removal of the 5'-leader sequence from pre-tRNA to produce the mature 5'-terminus. It can also cleave other RNA substrates such as 4.5S RNA. The protein component plays an auxiliary but essential role in vivo by binding to the 5'-leader sequence and broadening the substrate specificity of the ribozyme. The protein is Ribonuclease P protein component of Bacillus pumilus (strain SAFR-032).